The following is a 274-amino-acid chain: Actin-binding protein Smlt3054 (274 aa).

ANK repeat units lie at residues 192-221 and 225-254; these read SGNT…DVAA and HGWA…NPEQ. Residues 251-274 are disordered; the sequence is NPEQPGWRGRTPTRMHRHEQTQAL.

Exists as a dimer as well as a higher order oligomer.

Its subcellular location is the secreted. It localises to the periplasm. In terms of biological role, directly binds F-actin, which results in thickened and distorted F-actin fibers, and affects cellular F-actin localization. Thus, may be a host effector whose function is to disrupt host actin cytoskeletal structure, which may enhance invasion. This Stenotrophomonas maltophilia (strain K279a) protein is Actin-binding protein Smlt3054.